A 387-amino-acid polypeptide reads, in one-letter code: Putative actin-29 (387 aa).

Belongs to the actin family.

It is found in the cytoplasm. The protein resides in the cytoskeleton. The enzyme catalyses ATP + H2O = ADP + phosphate + H(+). Its function is as follows. Actins are highly conserved proteins that are involved in various types of cell motility and are ubiquitously expressed in all eukaryotic cells. Multiple isoforms are involved in various cellular functions such as cytoskeleton structure, cell mobility, chromosome movement and muscle contraction. The chain is Putative actin-29 (act29) from Dictyostelium discoideum (Social amoeba).